Consider the following 281-residue polypeptide: MSKYKDAKELAGLTLGQKTDYIDQYDASLLQPVPRSLNRSDLNLGESLPFTGYDIWTLYELSWLNSKGLPQVAIGEVRLPASSPNLIESKSFKLYLNSFNQTRFDSWQQIADTLQKDLTACAGQEVDVTIQPLEDFTDQTVINFAGNCIDEQDIEINSYDFDAQYLKDAAEGEIVTEDLHSHLLKSNCLITNQPDWGSVKISYKGKQINREKLLRYLVSFRNHNEFHEQCVERIFTDIMKFCQPELLTVYARYTRRGGLDINPYRTNQGKTPSDNFRLARQ.

87–89 lines the substrate pocket; sequence IES. NADPH is bound at residue 89-90; the sequence is SK. Cys188 acts as the Thioimide intermediate in catalysis. The active-site Proton donor is Asp195. Position 227–228 (227–228) interacts with substrate; that stretch reads HE. 256-257 contacts NADPH; it reads RG.

Belongs to the GTP cyclohydrolase I family. QueF type 2 subfamily. Homodimer.

It is found in the cytoplasm. The enzyme catalyses 7-aminomethyl-7-carbaguanine + 2 NADP(+) = 7-cyano-7-deazaguanine + 2 NADPH + 3 H(+). Its pathway is tRNA modification; tRNA-queuosine biosynthesis. Its function is as follows. Catalyzes the NADPH-dependent reduction of 7-cyano-7-deazaguanine (preQ0) to 7-aminomethyl-7-deazaguanine (preQ1). This Photobacterium profundum (strain SS9) protein is NADPH-dependent 7-cyano-7-deazaguanine reductase.